A 209-amino-acid chain; its full sequence is Pyridoxal 5'-phosphate synthase subunit PdxT (209 aa).

Residue 58–60 (GES) coordinates L-glutamine. C90 (nucleophile) is an active-site residue. L-glutamine is bound by residues R119 and 148–149 (IR). Residues H185 and E187 each act as charge relay system in the active site.

The protein belongs to the glutaminase PdxT/SNO family. In the presence of PdxS, forms a dodecamer of heterodimers. Only shows activity in the heterodimer.

The enzyme catalyses aldehydo-D-ribose 5-phosphate + D-glyceraldehyde 3-phosphate + L-glutamine = pyridoxal 5'-phosphate + L-glutamate + phosphate + 3 H2O + H(+). The catalysed reaction is L-glutamine + H2O = L-glutamate + NH4(+). It participates in cofactor biosynthesis; pyridoxal 5'-phosphate biosynthesis. In terms of biological role, catalyzes the hydrolysis of glutamine to glutamate and ammonia as part of the biosynthesis of pyridoxal 5'-phosphate. The resulting ammonia molecule is channeled to the active site of PdxS. In Clavibacter sepedonicus (Clavibacter michiganensis subsp. sepedonicus), this protein is Pyridoxal 5'-phosphate synthase subunit PdxT.